Here is a 473-residue protein sequence, read N- to C-terminus: Rifampicin monooxygenase (473 aa).

Positions 12, 31, 32, and 41 each coordinate FAD. A rifampicin-binding site is contributed by arginine 43. Residues glutamine 98, valine 122, and threonine 156 each contribute to the FAD site. Arginine 196 contacts rifampicin. Position 276 (aspartate 276) interacts with FAD. Glycine 285 is a rifampicin binding site. FAD contacts are provided by leucine 289 and asparagine 290.

This sequence belongs to the rifampicin monooxygenase family. As to quaternary structure, homodimer. FAD is required as a cofactor.

The catalysed reaction is rifampicin + NADPH + O2 = rifampicin para-naphthoquinone carboxamide + NADP(+) + H2O + H(+). The enzyme catalyses rifampicin + NADH + O2 = rifampicin para-naphthoquinone carboxamide + NAD(+) + H2O + H(+). Its function is as follows. Monooxygenase that can modify rifampicin, thereby inactivating its antibiotic activity. It constitutes a secondary rifampicin resistance factor. In Nocardia farcinica (strain IFM 10152), this protein is Rifampicin monooxygenase.